The chain runs to 38 residues: Large ribosomal subunit protein bL36 (38 aa).

It belongs to the bacterial ribosomal protein bL36 family.

The polypeptide is Large ribosomal subunit protein bL36 (Wigglesworthia glossinidia brevipalpis).